Consider the following 308-residue polypeptide: Ribosomal RNA small subunit methyltransferase H (308 aa).

S-adenosyl-L-methionine is bound by residues 36 to 38, Asp55, Phe82, Asp103, and Gln110; that span reads GGH.

The protein belongs to the methyltransferase superfamily. RsmH family.

It is found in the cytoplasm. The catalysed reaction is cytidine(1402) in 16S rRNA + S-adenosyl-L-methionine = N(4)-methylcytidine(1402) in 16S rRNA + S-adenosyl-L-homocysteine + H(+). In terms of biological role, specifically methylates the N4 position of cytidine in position 1402 (C1402) of 16S rRNA. The chain is Ribosomal RNA small subunit methyltransferase H from Helicobacter pylori (strain J99 / ATCC 700824) (Campylobacter pylori J99).